We begin with the raw amino-acid sequence, 233 residues long: Leucyl/phenylalanyl-tRNA--protein transferase (233 aa).

The protein belongs to the L/F-transferase family.

The protein localises to the cytoplasm. The catalysed reaction is N-terminal L-lysyl-[protein] + L-leucyl-tRNA(Leu) = N-terminal L-leucyl-L-lysyl-[protein] + tRNA(Leu) + H(+). The enzyme catalyses N-terminal L-arginyl-[protein] + L-leucyl-tRNA(Leu) = N-terminal L-leucyl-L-arginyl-[protein] + tRNA(Leu) + H(+). It carries out the reaction L-phenylalanyl-tRNA(Phe) + an N-terminal L-alpha-aminoacyl-[protein] = an N-terminal L-phenylalanyl-L-alpha-aminoacyl-[protein] + tRNA(Phe). Functionally, functions in the N-end rule pathway of protein degradation where it conjugates Leu, Phe and, less efficiently, Met from aminoacyl-tRNAs to the N-termini of proteins containing an N-terminal arginine or lysine. The sequence is that of Leucyl/phenylalanyl-tRNA--protein transferase from Anaeromyxobacter dehalogenans (strain 2CP-1 / ATCC BAA-258).